Consider the following 574-residue polypeptide: Type II methyltransferase M.PaeR7I (574 aa).

This sequence belongs to the N(4)/N(6)-methyltransferase family. In terms of assembly, monomer.

The catalysed reaction is a 2'-deoxyadenosine in DNA + S-adenosyl-L-methionine = an N(6)-methyl-2'-deoxyadenosine in DNA + S-adenosyl-L-homocysteine + H(+). A gamma subtype methylase, recognizes the double-stranded sequence 5'-CTCGAG-3', methylates A-5 on both strands, and protects the DNA from cleavage by the PaeR7I endonuclease. The sequence is that of Type II methyltransferase M.PaeR7I (paeR7IM) from Pseudomonas aeruginosa.